A 185-amino-acid chain; its full sequence is Pycsar effector protein EcPycTM (185 aa).

The next 3 membrane-spanning stretches (helical) occupy residues 32 to 52, 63 to 83, and 141 to 161; these read ALLL…VGYF, MVIF…SVLL, and FILS…VSWI.

The protein localises to the cell inner membrane. Pycsar (pyrimidine cyclase system for antiphage resistance) provides immunity against bacteriophage. The pyrimidine cyclase (PycC) synthesizes cyclic nucleotides in response to infection; these serve as specific second messenger signals. The signals activate the adjacent effector, leading to bacterial cell death and abortive phage infection. A clade E Pycsar system. Functionally, the effector component of a two-gene Pycsar system. Expression of this and adjacent cytidylate cyclase EcPycC (AC P0DV24) confers resistance to bacteriophage P1 and T5; this protein is required for resistance. When cells expressing the Pycsar system are infected by phage T5 at low multiplicity of infection (0.2 MOI) the culture survives, at 2.0 MOI bacteria enter growth arrest. The same cells enter growth arrest after exposure to 250 uM cCMP but not cUMP; this effector protein responds only to cCMP, usually produced by its cognate NTP cyclase. Some of the cells treated with cCMP have abnormal membrane protrusions, probably due to effects on membrane integrity. The polypeptide is Pycsar effector protein EcPycTM (Escherichia coli).